A 457-amino-acid polypeptide reads, in one-letter code: tRNA modification GTPase MnmE (457 aa).

R22, E86, and R125 together coordinate (6S)-5-formyl-5,6,7,8-tetrahydrofolate. In terms of domain architecture, TrmE-type G spans 221-381 (GLRAVLAGRP…LEAEVARVAG (161 aa)). N231 provides a ligand contact to K(+). Residues 231–236 (NVGKSS), 250–256 (TPIPGTT), and 275–278 (DTAG) contribute to the GTP site. Position 235 (S235) interacts with Mg(2+). Positions 250, 252, and 255 each coordinate K(+). A Mg(2+)-binding site is contributed by T256. K457 contributes to the (6S)-5-formyl-5,6,7,8-tetrahydrofolate binding site.

The protein belongs to the TRAFAC class TrmE-Era-EngA-EngB-Septin-like GTPase superfamily. TrmE GTPase family. As to quaternary structure, homodimer. Heterotetramer of two MnmE and two MnmG subunits. The cofactor is K(+).

The protein localises to the cytoplasm. Exhibits a very high intrinsic GTPase hydrolysis rate. Involved in the addition of a carboxymethylaminomethyl (cmnm) group at the wobble position (U34) of certain tRNAs, forming tRNA-cmnm(5)s(2)U34. The protein is tRNA modification GTPase MnmE of Symbiobacterium thermophilum (strain DSM 24528 / JCM 14929 / IAM 14863 / T).